The primary structure comprises 233 residues: Putative glutathione peroxidase 7, chloroplastic (233 aa).

The transit peptide at 1 to 69 directs the protein to the chloroplast; that stretch reads MAFSYASFST…KSKNFSVYAR (69 aa). Residue C108 is part of the active site.

Belongs to the glutathione peroxidase family.

The protein localises to the plastid. The protein resides in the chloroplast. The catalysed reaction is 2 glutathione + H2O2 = glutathione disulfide + 2 H2O. In terms of biological role, may constitute a glutathione peroxidase-like protective system against oxidative stresses. This Arabidopsis thaliana (Mouse-ear cress) protein is Putative glutathione peroxidase 7, chloroplastic (GPX7).